The sequence spans 151 residues: MLP-like protein 328 (151 aa).

This sequence belongs to the MLP family.

This chain is MLP-like protein 328 (MLP328), found in Arabidopsis thaliana (Mouse-ear cress).